The sequence spans 435 residues: GTPase Obg (435 aa).

The Obg domain occupies 1–159 (MAFIDKCKIV…VEVLLELKTI (159 aa)). The OBG-type G domain maps to 160-329 (ADIGIIGLPN…MLDDVIKIYF (170 aa)). Residues 166 to 173 (GLPNAGKS), 191 to 195 (FTTLN), 212 to 215 (DIPG), 282 to 285 (NKID), and 310 to 312 (SAL) each bind GTP. The Mg(2+) site is built by Ser-173 and Thr-193. An OCT domain is found at 357 to 435 (KSKELDKTIE…IYDITLEFEE (79 aa)).

It belongs to the TRAFAC class OBG-HflX-like GTPase superfamily. OBG GTPase family. In terms of assembly, monomer. Mg(2+) serves as cofactor.

Its subcellular location is the cytoplasm. Functionally, an essential GTPase which binds GTP, GDP and possibly (p)ppGpp with moderate affinity, with high nucleotide exchange rates and a fairly low GTP hydrolysis rate. Plays a role in control of the cell cycle, stress response, ribosome biogenesis and in those bacteria that undergo differentiation, in morphogenesis control. This chain is GTPase Obg, found in Ureaplasma parvum serovar 3 (strain ATCC 27815 / 27 / NCTC 11736).